The primary structure comprises 207 residues: Putative 3-methyladenine DNA glycosylase (207 aa).

Belongs to the DNA glycosylase MPG family.

This is Putative 3-methyladenine DNA glycosylase from Koribacter versatilis (strain Ellin345).